The chain runs to 355 residues: Hydroxylysine kinase (355 aa).

The Proton acceptor role is filled by aspartate 215.

It belongs to the aminoglycoside phosphotransferase family.

Its subcellular location is the cytoplasm. It catalyses the reaction (5R)-5-hydroxy-L-lysine + GTP = (5R)-5-phosphooxy-L-lysine + GDP + H(+). Its function is as follows. Catalyzes the GTP-dependent phosphorylation of 5-hydroxy-L-lysine. This chain is Hydroxylysine kinase (hykk), found in Danio rerio (Zebrafish).